A 246-amino-acid chain; its full sequence is 4-hydroxy-tetrahydrodipicolinate reductase (246 aa).

NAD(+) is bound by residues 8–13 (GALGRM), D34, 74–76 (GTT), and 101–104 (APNF). H131 serves as the catalytic Proton donor/acceptor. A (S)-2,3,4,5-tetrahydrodipicolinate-binding site is contributed by H132. K135 (proton donor) is an active-site residue. 141–142 (GT) contributes to the (S)-2,3,4,5-tetrahydrodipicolinate binding site.

This sequence belongs to the DapB family.

It is found in the cytoplasm. The enzyme catalyses (S)-2,3,4,5-tetrahydrodipicolinate + NAD(+) + H2O = (2S,4S)-4-hydroxy-2,3,4,5-tetrahydrodipicolinate + NADH + H(+). It carries out the reaction (S)-2,3,4,5-tetrahydrodipicolinate + NADP(+) + H2O = (2S,4S)-4-hydroxy-2,3,4,5-tetrahydrodipicolinate + NADPH + H(+). The protein operates within amino-acid biosynthesis; L-lysine biosynthesis via DAP pathway; (S)-tetrahydrodipicolinate from L-aspartate: step 4/4. Its function is as follows. Catalyzes the conversion of 4-hydroxy-tetrahydrodipicolinate (HTPA) to tetrahydrodipicolinate. In Thermobifida fusca (strain YX), this protein is 4-hydroxy-tetrahydrodipicolinate reductase.